The primary structure comprises 296 residues: 4-diphosphocytidyl-2-C-methyl-D-erythritol kinase (296 aa).

Lys11 is a catalytic residue. An ATP-binding site is contributed by 96–106 (PVSSGLAGGSA). Residue Asp136 is part of the active site.

The protein belongs to the GHMP kinase family. IspE subfamily.

The catalysed reaction is 4-CDP-2-C-methyl-D-erythritol + ATP = 4-CDP-2-C-methyl-D-erythritol 2-phosphate + ADP + H(+). It participates in isoprenoid biosynthesis; isopentenyl diphosphate biosynthesis via DXP pathway; isopentenyl diphosphate from 1-deoxy-D-xylulose 5-phosphate: step 3/6. Its function is as follows. Catalyzes the phosphorylation of the position 2 hydroxy group of 4-diphosphocytidyl-2C-methyl-D-erythritol. The protein is 4-diphosphocytidyl-2-C-methyl-D-erythritol kinase of Anaplasma phagocytophilum (strain HZ).